Here is a 312-residue protein sequence, read N- to C-terminus: Taste receptor type 2 member 103 (312 aa).

At 1 to 6 (MVLTIR) the chain is on the extracellular side. A helical membrane pass occupies residues 7 to 27 (AILWVTLITIISLEFIIGILG). The Cytoplasmic segment spans residues 28–61 (NVFIALVNIIDWVKRGKISAVDKTYMALAISRTA). A helical transmembrane segment spans residues 62-82 (FLLSLITGFLVSLLDPALLGM). Residues 83-92 (RTMVRLLTIS) are Extracellular-facing. The chain crosses the membrane as a helical span at residues 93 to 113 (WMVTNHFSVWFATCLSIFYFL). Residues 114–132 (KIANFSNSIFLVLKWEAKK) are Cytoplasmic-facing. A helical transmembrane segment spans residues 133–153 (VVSVTLVVSVIILIMNIIVIN). The Extracellular segment spans residues 154–185 (KFTDRLQVNTLQNCSTSNTLKDYGLFLFISTG). An N-linked (GlcNAc...) asparagine glycan is attached at Asn166. The chain crosses the membrane as a helical span at residues 186 to 206 (FTLTPFAVSLTMFLLLIFSLW). The Cytoplasmic segment spans residues 207–229 (RHLKNMCHSATGSRDVSTVAHIK). Residues 230-250 (GLQTVVTFLLLYTAFVMSLLS) form a helical membrane-spanning segment. At 251 to 264 (ESLNINIQHTNLLS) the chain is on the extracellular side. A helical membrane pass occupies residues 265–285 (HFLRSIGVAFPTGHSCVLILG). Residues 286 to 312 (NSKLRQASLSVILWLRYKYKHIENWGP) are Cytoplasmic-facing.

The protein belongs to the G-protein coupled receptor T2R family. Expressed in subsets of taste receptor cells of the tongue and palate epithelium and exclusively in gustducin-positive cells. Expressed in 15% taste bud cells in circumvallate and foliate papillae but only in 2% in fungiform papillae.

Its subcellular location is the membrane. Gustducin-coupled receptor implicated in the perception of bitter compounds in the oral cavity and the gastrointestinal tract. Signals through PLCB2 and the calcium-regulated cation channel TRPM5. The sequence is that of Taste receptor type 2 member 103 (Tas2r103) from Mus musculus (Mouse).